We begin with the raw amino-acid sequence, 134 residues long: ATP synthase epsilon chain (134 aa).

The protein belongs to the ATPase epsilon chain family. F-type ATPases have 2 components, CF(1) - the catalytic core - and CF(0) - the membrane proton channel. CF(1) has five subunits: alpha(3), beta(3), gamma(1), delta(1), epsilon(1). CF(0) has three main subunits: a, b and c.

The protein resides in the cell inner membrane. Produces ATP from ADP in the presence of a proton gradient across the membrane. The sequence is that of ATP synthase epsilon chain from Rhizobium meliloti (strain 1021) (Ensifer meliloti).